The primary structure comprises 520 residues: Peptide chain release factor 3 (520 aa).

The tr-type G domain maps to 8-277 (ESRKTFAIIS…FAPMPNARQT (270 aa)). GTP is bound by residues 17–24 (SHPDAGKT), 85–89 (DTPGH), and 139–142 (NKLD).

It belongs to the TRAFAC class translation factor GTPase superfamily. Classic translation factor GTPase family. PrfC subfamily.

It localises to the cytoplasm. Its function is as follows. Increases the formation of ribosomal termination complexes and stimulates activities of RF-1 and RF-2. It binds guanine nucleotides and has strong preference for UGA stop codons. It may interact directly with the ribosome. The stimulation of RF-1 and RF-2 is significantly reduced by GTP and GDP, but not by GMP. This is Peptide chain release factor 3 from Staphylococcus aureus (strain MRSA252).